We begin with the raw amino-acid sequence, 323 residues long: o-succinylbenzoate synthase (323 aa).

Residue Lys-134 is the Proton donor of the active site. Mg(2+) contacts are provided by Asp-162, Glu-191, and Asp-214. Lys-236 functions as the Proton acceptor in the catalytic mechanism.

It belongs to the mandelate racemase/muconate lactonizing enzyme family. MenC type 1 subfamily. A divalent metal cation is required as a cofactor.

It catalyses the reaction (1R,6R)-6-hydroxy-2-succinyl-cyclohexa-2,4-diene-1-carboxylate = 2-succinylbenzoate + H2O. Its pathway is quinol/quinone metabolism; 1,4-dihydroxy-2-naphthoate biosynthesis; 1,4-dihydroxy-2-naphthoate from chorismate: step 4/7. It functions in the pathway quinol/quinone metabolism; menaquinone biosynthesis. Functionally, converts 2-succinyl-6-hydroxy-2,4-cyclohexadiene-1-carboxylate (SHCHC) to 2-succinylbenzoate (OSB). The sequence is that of o-succinylbenzoate synthase from Photorhabdus laumondii subsp. laumondii (strain DSM 15139 / CIP 105565 / TT01) (Photorhabdus luminescens subsp. laumondii).